We begin with the raw amino-acid sequence, 512 residues long: Serine palmitoyltransferase 3 (512 aa).

K345 is modified (N6-(pyridoxal phosphate)lysine).

The protein belongs to the class-II pyridoxal-phosphate-dependent aminotransferase family. In terms of assembly, heterodimer of sptl-1/sptl-3. The cofactor is pyridoxal 5'-phosphate.

The enzyme catalyses L-serine + hexadecanoyl-CoA + H(+) = 3-oxosphinganine + CO2 + CoA. The protein operates within lipid metabolism; sphingolipid metabolism. Its function is as follows. Component of the serine palmitoyltransferase (SPT) that catalyzes the first committed step in sphingolipid biosynthesis, which is the condensation of an acyl-CoA species and L-serine. The catalytic core is composed of a heterodimer of sptl-1 and sptl-2 or sptl-1 and sptl-3. Required for the specification of abicobasal polarity and development of the gut lumen. This chain is Serine palmitoyltransferase 3 (sptl-3), found in Caenorhabditis elegans.